Here is a 210-residue protein sequence, read N- to C-terminus: SAP domain-containing ribonucleoprotein (210 aa).

An N-acetylalanine modification is found at A2. The region spanning 8-42 is the SAP domain; the sequence is LHKLKLAELKQECLARGLETKGIKQDLIHRLQAYL. K10 carries the N6-acetyllysine modification. A compositionally biased stretch (acidic residues) spans 45–64; it reads HAEEEANEEDVLGDETEEEE. The tract at residues 45 to 86 is disordered; that stretch reads HAEEEANEEDVLGDETEEEETKPIELPVKEEEPPEKTVDVAA. Residues 65 to 86 show a composition bias toward basic and acidic residues; that stretch reads TKPIELPVKEEEPPEKTVDVAA. N6-acetyllysine is present on K142. Positions 161–210 are disordered; sequence VSSISRKSEDDEKLKKRKERFGIVTSSAGTGTTEDTEAKKRKRAERFGIA. S163 carries the phosphoserine modification. Residues 184–193 show a composition bias toward polar residues; the sequence is VTSSAGTGTT.

This sequence belongs to the SAP domain-containing ribonucleoprotein family. As to quaternary structure, interacts with DDX39A. Interacts with FUS. Interacts (via the C-terminal domain) with DDX39B; the interaction is direct and facilitates RNA binding of DDX39B. Component of the transcription/export (TREX) complex at least composed of ALYREF/THOC4, DDX39B, SARNP/CIP29, CHTOP and the THO subcomplex; TREX seems to have dynamic structure involving ATP-dependent remodeling; in the complex interacts directly with DDX39B in a ATP-dependent manner which bridges it to ALYREF/THOC4. As to expression, low expression in spleen, liver, pancreas, testis, thymus, heart, and kidney. Increased levels are seen in hepatocellular carcinoma and pancreatic adenocarcinoma.

The protein localises to the nucleus. The protein resides in the nucleus speckle. Its function is as follows. Binds both single-stranded and double-stranded DNA with higher affinity for the single-stranded form. Specifically binds to scaffold/matrix attachment region DNA. Also binds single-stranded RNA. Enhances RNA unwinding activity of DDX39A. May participate in important transcriptional or translational control of cell growth, metabolism and carcinogenesis. Component of the TREX complex which is thought to couple mRNA transcription, processing and nuclear export, and specifically associates with spliced mRNA and not with unspliced pre-mRNA. The TREX complex is recruited to spliced mRNAs by a transcription-independent mechanism, binds to mRNA upstream of the exon-junction complex (EJC) and is recruited in a splicing- and cap-dependent manner to a region near the 5' end of the mRNA where it functions in mRNA export to the cytoplasm via the TAP/NXF1 pathway. Associates with DDX39B, which facilitates RNA binding of DDX39B and likely plays a role in mRNA export. The protein is SAP domain-containing ribonucleoprotein (SARNP) of Homo sapiens (Human).